The following is a 987-amino-acid chain: Leucine--tRNA ligase (987 aa).

The 'HIGH' region signature appears at 69 to 80 (PYPSGKGLHVGH). Residues 760–764 (KMGKS) carry the 'KMSKS' region motif. Lysine 763 is a binding site for ATP.

Belongs to the class-I aminoacyl-tRNA synthetase family.

The protein resides in the cytoplasm. It carries out the reaction tRNA(Leu) + L-leucine + ATP = L-leucyl-tRNA(Leu) + AMP + diphosphate. The polypeptide is Leucine--tRNA ligase (Bifidobacterium longum (strain DJO10A)).